The primary structure comprises 890 residues: Inter-alpha-trypsin inhibitor heavy chain H3 (890 aa).

The first 20 residues, 1–20, serve as a signal peptide directing secretion; the sequence is MAFAWWPCLILALLSSLAAS. The propeptide occupies 21-34; the sequence is GFPRSPFRLLGKRS. A VIT domain is found at 29-158; the sequence is LLGKRSLPEG…KVTFELTYEE (130 aa). Residue Asn-91 is glycosylated (N-linked (GlcNAc...) asparagine). The VWFA domain maps to 284-467; that stretch reads NVAFVIDISG…LQLQGFYEEV (184 aa). Asn-580 carries N-linked (GlcNAc...) asparagine glycosylation. Asp-651 is modified (aspartate 1-(chondroitin 4-sulfate)-ester). A propeptide spanning residues 652–890 is cleaved from the precursor; sequence PHFIIQIPEK…HTDYIVPNLF (239 aa).

Belongs to the ITIH family. I-alpha-I plasma protease inhibitors are assembled from one or two heavy chains (HC) and one light chain, bikunin. Pre-alpha-inhibitor (P-alpha-I) is composed of ITIH3/HC3 and bikunin. Post-translationally, heavy chains are linked to bikunin via chondroitin 4-sulfate esterified to the alpha-carboxyl of the C-terminal aspartate after propeptide cleavage.

It is found in the secreted. Its function is as follows. May act as a carrier of hyaluronan in serum or as a binding protein between hyaluronan and other matrix protein, including those on cell surfaces in tissues to regulate the localization, synthesis and degradation of hyaluronan which are essential to cells undergoing biological processes. In Homo sapiens (Human), this protein is Inter-alpha-trypsin inhibitor heavy chain H3 (ITIH3).